The following is a 187-amino-acid chain: Biogenesis of lysosome-related organelles complex 1 subunit 5 (187 aa).

The tract at residues 1-26 is disordered; it reads MSGGGTETPVGCEAAPGGGSKKRDSL. Ser2 carries the N-acetylserine modification. Residues 154-186 adopt a coiled-coil conformation; the sequence is NKRAEVDEEHRKAMERLKEQYAEMEKDLAKFST.

This sequence belongs to the BLOC1S5 family. As to quaternary structure, interacts with BLOC1S4, DTNBP1/BLOC1S7 and PI4K2A. Component of the biogenesis of lysosome-related organelles complex 1 (BLOC-1) composed of BLOC1S1, BLOC1S2, BLOC1S3, BLOC1S4, BLOC1S5, BLOC1S6, DTNBP1/BLOC1S7 and SNAPIN/BLOC1S8. Octamer composed of one copy each BLOC1S1, BLOC1S2, BLOC1S3, BLOC1S4, BLOC1S5, BLOC1S6, DTNBP1/BLOC1S7 and SNAPIN/BLOC1S8. The BLOC-1 complex associates with the AP-3 protein complex and membrane protein cargos. Interacts with BLOC1S6.

In terms of biological role, component of the BLOC-1 complex, a complex that is required for normal biogenesis of lysosome-related organelles (LRO), such as platelet dense granules and melanosomes. In concert with the AP-3 complex, the BLOC-1 complex is required to target membrane protein cargos into vesicles assembled at cell bodies for delivery into neurites and nerve terminals. The BLOC-1 complex, in association with SNARE proteins, is also proposed to be involved in neurite extension. Plays a role in intracellular vesicle trafficking. This is Biogenesis of lysosome-related organelles complex 1 subunit 5 from Homo sapiens (Human).